Consider the following 329-residue polypeptide: Ribose-phosphate pyrophosphokinase B (329 aa).

The Mg(2+) site is built by Asp131, His133, and Glu146. Residues 227 to 242 (TGKIAIIIDDIADTCK) are binding of phosphoribosylpyrophosphate.

It belongs to the ribose-phosphate pyrophosphokinase family. Requires Mg(2+) as cofactor.

The protein localises to the cytoplasm. It catalyses the reaction D-ribose 5-phosphate + ATP = 5-phospho-alpha-D-ribose 1-diphosphate + AMP + H(+). Its pathway is metabolic intermediate biosynthesis; 5-phospho-alpha-D-ribose 1-diphosphate biosynthesis; 5-phospho-alpha-D-ribose 1-diphosphate from D-ribose 5-phosphate (route I): step 1/1. This chain is Ribose-phosphate pyrophosphokinase B (prsB), found in Dictyostelium discoideum (Social amoeba).